A 226-amino-acid polypeptide reads, in one-letter code: uncharacterized protein (226 aa).

The Response regulatory domain occupies 1–112; that stretch reads MLVEDDHSIS…ELTARVKAAI (112 aa). Residue aspartate 48 is modified to 4-aspartylphosphate. The segment at residues 126–225 is a DNA-binding region (ompR/PhoB-type); it reads NKVIRIHQLA…LWGIGYKLGE (100 aa).

Post-translationally, phosphorylated by YcbM.

Its subcellular location is the cytoplasm. In terms of biological role, member of the two-component regulatory system YcbM/YcbL. This is an uncharacterized protein from Bacillus subtilis (strain 168).